The primary structure comprises 477 residues: Cysteine--tRNA ligase (477 aa).

C28 is a Zn(2+) binding site. The 'HIGH' region signature appears at 30 to 40 (PTVYDYPHLGH). C208, H233, and E237 together coordinate Zn(2+). The short motif at 265 to 269 (KMSKS) is the 'KMSKS' region element. Position 268 (K268) interacts with ATP.

It belongs to the class-I aminoacyl-tRNA synthetase family. Requires Zn(2+) as cofactor.

The protein resides in the cytoplasm. It carries out the reaction tRNA(Cys) + L-cysteine + ATP = L-cysteinyl-tRNA(Cys) + AMP + diphosphate. This chain is Cysteine--tRNA ligase, found in Pyrococcus furiosus (strain ATCC 43587 / DSM 3638 / JCM 8422 / Vc1).